Reading from the N-terminus, the 212-residue chain is MAVVSVEELVVDPPTAARRLLGATLRSGQVAVRLVEVEAYGGDAEGPWPDPASHSGRGRTKRNAVMFGPAGYLYVYLSYGMHTCVNVTTGPDGTAGAVLLRAGEVVDGLDVVRGRRPTARTDADLARGPGNFGTALGIALDDYGTALFDPAAPIRLELADPLPAALIADGPRVGVSSEADRPWRFWLPSSPAVSAYRRSPRAPGAATVRAPR.

Belongs to the DNA glycosylase MPG family.

This Nocardia farcinica (strain IFM 10152) protein is Putative 3-methyladenine DNA glycosylase.